The primary structure comprises 468 residues: MRAAPSLRRASCLLLAAILDLARGYLTVNIEPLPPVVAGDAVTLKCNFKTDGRMREIVWYRVTDGGTIKQKIFTFDAMFSTNYSHMENYRKREDLVYQSTVRLPEVRISDNGPYECHVGIYDRATREKVVLASGNIFLNVMAPPTSIEVVAADSPAPFSRYQAQNFTLVCIVSGGKPAPMVYFKRDGEPIDAVPLTELPASSSGSVQDSRPFRSLLHRDVDDTKMQKSLSLLDTEYRAGRPYTERPSRSLTQDPNLFVQPTTENIPETVVSREFPRWVHSAEPVYFLRHSRTPGSDGTVEVRALLTWTLNPQIDNEALFSCEVKHPALSMPMQAEVTLVAPKGPKIMMTPSRARVGDTVRILVHGFQNEVFPEPMFTWTRVGSRLLDGSAEFDGKELVLERVPAELNGSMYRCTAQNPLGSTDTHTRLIVFENPNIPRGTEDSRGSASGPTGVRLTLVLALTVILELT.

A signal peptide spans 1 to 24 (MRAAPSLRRASCLLLAAILDLARG). Ig-like domains lie at 25–132 (YLTV…VVLA) and 344–429 (PKIM…TRLI). A disulfide bond links cysteine 46 and cysteine 116.

Interacts (Ig-like 1 domain) with NRXN2 (via Laminin G-like 1 domain) in a trans-interaction manner. In terms of tissue distribution, expressed in brain.

The protein localises to the postsynaptic cell membrane. Functionally, involved in synaptic inhibition in the brain. Selectively regulates inhibitory presynaptic differentiation through interacting with presynaptic NRXN2. The polypeptide is Immunoglobulin superfamily member 21 (Rattus norvegicus (Rat)).